Here is a 286-residue protein sequence, read N- to C-terminus: Peroxisomal membrane protein pex14 (286 aa).

An SH3-binding motif is present at residues 61-69 (TSNFVSRDW). Residues 122-214 (KILENLDEQT…REISSLRCLQ (93 aa)) are a coiled coil. Positions 218–239 (KKDDTFATTSNSSIPVLENPLD) are disordered.

It belongs to the peroxin-14 family. As to quaternary structure, interacts with PEX13 (via SH3 domain); forming the PEX13-PEX14 docking complex. Interacts with PEX5 (via WxxxF/Y motifs).

It localises to the peroxisome membrane. In terms of biological role, component of the PEX13-PEX14 docking complex, a translocon channel that specifically mediates the import of peroxisomal cargo proteins bound to PEX5 receptor. The PEX13-PEX14 docking complex forms a large import pore which can be opened to a diameter of about 9 nm. Mechanistically, PEX5 receptor along with cargo proteins associates with the PEX14 subunit of the PEX13-PEX14 docking complex in the cytosol, leading to the insertion of the receptor into the organelle membrane with the concomitant translocation of the cargo into the peroxisome matrix. The chain is Peroxisomal membrane protein pex14 (pex14) from Schizosaccharomyces pombe (strain 972 / ATCC 24843) (Fission yeast).